The chain runs to 424 residues: STAM-binding protein (424 aa).

The interaction with CHMP3 stretch occupies residues 1 to 127 (MSDHGDVSLP…YTEYNEEKKK (127 aa)). 2 positions are modified to phosphoserine: S2 and S48. The interaction with STAM stretch occupies residues 227 to 231 (PAKPP). 3 positions are modified to phosphoserine: S243, S245, and S247. The MPN domain occupies 257 to 388 (VVVPGRLCPQ…LTDHGLEEIS (132 aa)). 7 residues coordinate Zn(2+): H335, H337, D348, H350, C390, H396, and H398. Residues 335-348 (HTHPTQTAFLSSVD) carry the JAMM motif motif.

Belongs to the peptidase M67C family. As to quaternary structure, interacts with STAM. Interacts with SMAD6 and SMAD7. Interacts with CHMP3; the interaction appears to relieve the autoinhibition of CHMP3. Interacts with SMURF2 and RNF11; this interaction promotes ubiquitination. Requires Zn(2+) as cofactor. In terms of processing, phosphorylated after BMP type I receptor activation. Ubiquitinated by SMURF2 in the presence of RNF11. Ubiquitously expressed.

Its subcellular location is the nucleus. It localises to the membrane. It is found in the cytoplasm. The protein localises to the early endosome. Its activity is regulated as follows. Inhibited by N-ethylmaleimide. Strongly and specifically inhibited by ubiquitin variants UbV(SP.2) and UbV(SP.3). Also inhibited by UbV(SP.1); an ubiquitin variant that also inhibits STAMBPL1. In terms of biological role, zinc metalloprotease that specifically cleaves 'Lys-63'-linked polyubiquitin chains. Does not cleave 'Lys-48'-linked polyubiquitin chains. Plays a role in signal transduction for cell growth and MYC induction mediated by IL-2 and GM-CSF. Potentiates BMP (bone morphogenetic protein) signaling by antagonizing the inhibitory action of SMAD6 and SMAD7. Has a key role in regulation of cell surface receptor-mediated endocytosis and ubiquitin-dependent sorting of receptors to lysosomes. Endosomal localization of STAMBP is required for efficient EGFR degradation but not for its internalization. Involved in the negative regulation of PI3K-AKT-mTOR and RAS-MAP signaling pathways. This chain is STAM-binding protein (STAMBP), found in Homo sapiens (Human).